We begin with the raw amino-acid sequence, 125 residues long: Snaclec B6 (125 aa).

Cystine bridges form between C2-C13, C30-C119, and C96-C111. The region spanning 9 to 120 is the C-type lectin domain; it reads HEGHCYKVFK…CNISQYFVCQ (112 aa). The N-linked (GlcNAc...) asparagine glycan is linked to N95. N112 carries N-linked (GlcNAc...) asparagine glycosylation.

Belongs to the snaclec family. Heterodimer; disulfide-linked. In terms of tissue distribution, expressed by the venom gland.

Its subcellular location is the secreted. In terms of biological role, interferes with one step of hemostasis (modulation of platelet aggregation, or coagulation cascade, for example). This Macrovipera lebetinus (Levantine viper) protein is Snaclec B6.